Consider the following 330-residue polypeptide: Phosphate acyltransferase (330 aa).

The protein belongs to the PlsX family. Homodimer. Probably interacts with PlsY.

The protein resides in the cytoplasm. The catalysed reaction is a fatty acyl-[ACP] + phosphate = an acyl phosphate + holo-[ACP]. Its pathway is lipid metabolism; phospholipid metabolism. Functionally, catalyzes the reversible formation of acyl-phosphate (acyl-PO(4)) from acyl-[acyl-carrier-protein] (acyl-ACP). This enzyme utilizes acyl-ACP as fatty acyl donor, but not acyl-CoA. This chain is Phosphate acyltransferase, found in Bacillus cereus (strain AH820).